The sequence spans 97 residues: Glutamyl-tRNA(Gln) amidotransferase subunit C (97 aa).

The protein belongs to the GatC family. As to quaternary structure, heterotrimer of A, B and C subunits.

The enzyme catalyses L-glutamyl-tRNA(Gln) + L-glutamine + ATP + H2O = L-glutaminyl-tRNA(Gln) + L-glutamate + ADP + phosphate + H(+). It carries out the reaction L-aspartyl-tRNA(Asn) + L-glutamine + ATP + H2O = L-asparaginyl-tRNA(Asn) + L-glutamate + ADP + phosphate + 2 H(+). Functionally, allows the formation of correctly charged Asn-tRNA(Asn) or Gln-tRNA(Gln) through the transamidation of misacylated Asp-tRNA(Asn) or Glu-tRNA(Gln) in organisms which lack either or both of asparaginyl-tRNA or glutaminyl-tRNA synthetases. The reaction takes place in the presence of glutamine and ATP through an activated phospho-Asp-tRNA(Asn) or phospho-Glu-tRNA(Gln). The protein is Glutamyl-tRNA(Gln) amidotransferase subunit C of Sulfurisphaera tokodaii (strain DSM 16993 / JCM 10545 / NBRC 100140 / 7) (Sulfolobus tokodaii).